A 440-amino-acid chain; its full sequence is D-serine dehydratase (440 aa).

The residue at position 116 (K116) is an N6-(pyridoxal phosphate)lysine.

It belongs to the serine/threonine dehydratase family. DsdA subfamily. In terms of assembly, monomer. Pyridoxal 5'-phosphate is required as a cofactor.

The enzyme catalyses D-serine = pyruvate + NH4(+). This Salmonella enteritidis PT4 (strain P125109) protein is D-serine dehydratase.